Here is a 469-residue protein sequence, read N- to C-terminus: 2-amino-4-ketopentanoate thiolase beta subunit (469 aa).

Lysine 102 is modified (N6-(pyridoxal phosphate)lysine). Pyridoxal 5'-phosphate-binding positions include asparagine 128 and 238–242 (AGGGN).

This sequence belongs to the threonine synthase family. In terms of assembly, heterodimer with OrtA. It depends on pyridoxal 5'-phosphate as a cofactor.

The catalysed reaction is D-alanine + acetyl-CoA = (2R)-2-amino-4-oxopentanoate + CoA. Its activity is regulated as follows. Completely inhibited by p-chloromercuribenzoate (p-ClHgBzO) and acetyl-CoA, and partially inhibited by N-ethylmaleimide. In terms of biological role, involved in the ornithine fermentation pathway. Catalyzes the thiolytic cleavage of 2-amino-4-ketopentanoate (AKP) with coenzyme A (CoA) to form acetyl-CoA and alanine. It is strictly specific for AKP. The chain is 2-amino-4-ketopentanoate thiolase beta subunit from Acetoanaerobium sticklandii (strain ATCC 12662 / DSM 519 / JCM 1433 / CCUG 9281 / NCIMB 10654 / HF) (Clostridium sticklandii).